A 1271-amino-acid polypeptide reads, in one-letter code: Diacylglycerol kinase kappa (1271 aa).

A compositionally biased stretch (low complexity) spans 1–15 (MDRGAAAAQGTAPPQ). Positions 1 to 160 (MDRGAAAAQG…PEPTPEPVTE (160 aa)) are disordered. Residues 23–44 (SPEPPPPWPPPPPPPAPPPAPP) show a composition bias toward pro residues. 33 tandem repeats follow at residues 48–51 (EASP), 52–55 (EPIP), 56–59 (EPCP), 60–63 (ELAP), 64–67 (GPCP), 68–71 (EATS), 72–75 (ESAT), 76–79 (ELYT), 80–83 (EPTP), 84–87 (EPAT), 88–91 (EPAS), 92–95 (EPAP), 96–99 (EPAT), 100–103 (EPAP), 104–107 (EPAT), 108–111 (EPAP), 112–115 (EPAP), 116–119 (EPAT), 120–123 (ESAP), 124–127 (EPTP), 128–131 (EPAL), 132–135 (ESVP), 136–139 (EPAP), 140–143 (ELTP), 144–147 (EVAP), 148–151 (ELAP), 152–155 (EPTP), 156–159 (EPVT), 160–163 (ELAP), 164–167 (EFCP), 168–171 (EAAP), 172–175 (EFRP), and 176–179 (SPAP). The segment at 48–179 (EASPEPIPEP…APEFRPSPAP (132 aa)) is 33 X 4 AA approximate tandem repeats of E-P-A-P. The segment covering 52–66 (EPIPEPCPELAPGPC) has biased composition (pro residues). A Phosphotyrosine modification is found at Tyr78. Residues 82 to 116 (TPEPATEPASEPAPEPATEPAPEPATEPAPEPAPE) are compositionally biased toward pro residues. Low complexity predominate over residues 139–149 (PELTPEVAPEL). The segment at 190-209 (ERGLKTSPSPSPSPSPRTPM) is disordered. The PH domain maps to 216–309 (KILKEGPMLK…WINIIKTIQQ (94 aa)). 2 Phorbol-ester/DAG-type zinc fingers span residues 327-377 (MHCW…SKDC) and 398-449 (PHQW…SKEC). Positions 487 to 622 (ACSCPLLIFI…LDRWSVMIRE (136 aa)) constitute a DAGKc domain. Disordered stretches follow at residues 805–825 (DDPE…GTLS) and 1252–1271 (RHRE…RSQL). The segment at 1199–1268 (PIFVPEEKSS…EGDDPLTPSR (70 aa)) is required for localization to the plasma membrane.

The protein belongs to the eukaryotic diacylglycerol kinase family. As to quaternary structure, does not form homooligomers. Post-translationally, phosphorylated at Tyr-78 by some member of the SRC family in response to H(2)O(2). As to expression, expressed in testis, and to a lesser extent in placenta.

It localises to the cell membrane. The catalysed reaction is a 1,2-diacyl-sn-glycerol + ATP = a 1,2-diacyl-sn-glycero-3-phosphate + ADP + H(+). It catalyses the reaction 1,2-di-(9Z-octadecenoyl)-sn-glycerol + ATP = 1,2-di-(9Z-octadecenoyl)-sn-glycero-3-phosphate + ADP + H(+). It functions in the pathway lipid metabolism; glycerolipid metabolism. Its activity is regulated as follows. Inhibited in response to H(2)O(2). Diacylglycerol kinase that converts diacylglycerol/DAG into phosphatidic acid/phosphatidate/PA and regulates the respective levels of these two bioactive lipids. Thereby, acts as a central switch between the signaling pathways activated by these second messengers with different cellular targets and opposite effects in numerous biological processes. This chain is Diacylglycerol kinase kappa, found in Homo sapiens (Human).